Reading from the N-terminus, the 248-residue chain is 5'-nucleotidase SurE (248 aa).

4 residues coordinate a divalent metal cation: Asp-8, Asp-9, Ser-39, and Asn-91.

Belongs to the SurE nucleotidase family. The cofactor is a divalent metal cation.

The protein localises to the cytoplasm. It carries out the reaction a ribonucleoside 5'-phosphate + H2O = a ribonucleoside + phosphate. Nucleotidase that shows phosphatase activity on nucleoside 5'-monophosphates. This chain is 5'-nucleotidase SurE, found in Geotalea uraniireducens (strain Rf4) (Geobacter uraniireducens).